The chain runs to 36 residues: Thrombin-like enzyme TLP (36 aa).

The Peptidase S1 domain maps to Ile-1–Val-36.

Belongs to the peptidase S1 family. Snake venom subfamily. As to quaternary structure, monomer. Expressed by the venom gland.

The protein resides in the secreted. In terms of biological role, thrombin-like snake venom serine protease. Shows strong hydrolytic activity towards Boc-Asp(oBzl)-Pro-Arg-MCA, a synthetic substrate for thrombin. In Naja naja (Indian cobra), this protein is Thrombin-like enzyme TLP.